Here is a 1173-residue protein sequence, read N- to C-terminus: MSRGSIEIPLRDTDEVIELDFDQLPEGDEVISILKQEHTQLHIWIALALEYYKQGKTEEFVKLLEAARIDGNLDYRDHEKDQMTCLDTLAAYYVQQARKEKNKDNKKDLITQATLLYTMADKIIMYDQNHLLGRACFCLLEGDKMDQADAQFHFVLNQSPNNIPALLGKACISFNKKDYRGALAYYKKALRTNPGCPAEVRLGMGHCFVKLNKLEKARLAFSRALELNSKCVGALVGLAVLELNNKEADSIKNGVQLLSRAYTIDPSNPMVLNHLANHFFFKKDYSKVQHLALHAFHNTEVEAMQAESCYQLARSFHVQEDYDQAFQYYYQATQFASSSFVLPFFGLGQMYIYRGDKENASQCFEKVLKAYPNNYETMKILGSLYAASEDQEKRDIAKGHLKKVTEQYPDDVEAWIELAQILEQTDIQGALSAYGTATRILQEKVQADVPPEILNNVGALHFRLGNLGEAKKYFLASLDRAKAEAEHDEHYYNAISVTTSYNLARLYEAMCEFHEAEKLYKNILREHPNYVDCYLRLGAMARDKGNFYEASDWFKEALQINQDHPDAWSLIGNLHLAKQEWGPGQKKFERILKQPATQSDTYSMLALGNVWLQTLHQPTRDREKEKRHQDRALAIYKQVLRNDAKNLYAANGIGAVLAHKGYFREARDVFAQVREATADISDVWLNLAHIYVEQKQYISAVQMYENCLRKFYKHQNTEVVLYLARALFKCGKLQECKQTLLKARHVAPSDTVLMFNVALVLQRLATSVLKDEKSNLKEVLNAVKELELAHRYFSYLSKVGDKMRFDLALAASEARQCSDLLSQAQYHVARARKQDEEERELRAKQEQEKELLRQKLLKEQEEKRLREKEEQKKLLEQRAQYVEKTKNILMFTGETEATKEKKRGGGGGRRSKKGGEFDEFVNDDTDDDLPVSKKKKRRKGSGSEQEGEEEEGGERKKKRRRRPPKGEEGSEEEETENGPKPKKRRPPRAEKKKAPKPERLPPSMKGKIKSKAIISSSDDSSDEDKLKIADEGHPRNSNSDSDDDERPNRRASSESDSDDNQNKSGSEAGSPRRSGRQESDEDSDSDQPSRKRRRSGSEQSDNESVQSGRSPSGASENENDSRPASPSAESDHESEQGSDNEGSGQGSGNESEPEGSNNEASDRGSEHGSDDSD.

TPR repeat units lie at residues 41 to 75, 129 to 162, 163 to 196, 198 to 231, 235 to 268, 306 to 339, 341 to 374, 412 to 444, 451 to 484, 497 to 530, 531 to 564, 566 to 598, 613 to 646, 647 to 680, 681 to 714, and 717 to 750; these read LHIWIALALEYYKQGKTEEFVKLLEAARIDGNLDY, NHLLGRACFCLLEGDKMDQADAQFHFVLNQSPNN, IPALLGKACISFNKKDYRGALAYYKKALRTNPGC, AEVRLGMGHCFVKLNKLEKARLAFSRALELNSKC, LVGLAVLELNNKEADSIKNGVQLLSRAYTIDPSN, AESCYQLARSFHVQEDYDQAFQYYYQATQFASSS, VLPFFGLGQMYIYRGDKENASQCFEKVLKAYPNN, VEAWIELAQILEQTDIQGALSAYGTATRILQEK, PEILNNVGALHFRLGNLGEAKKYFLASLDRAKAE, VTTSYNLARLYEAMCEFHEAEKLYKNILREHPNY, VDCYLRLGAMARDKGNFYEASDWFKEALQINQDH, DAWSLIGNLHLAKQEWGPGQKKFERILKQPATQ, QTLHQPTRDREKEKRHQDRALAIYKQVLRNDAKN, LYAANGIGAVLAHKGYFREARDVFAQVREATADI, SDVWLNLAHIYVEQKQYISAVQMYENCLRKFYKH, and TEVVLYLARALFKCGKLQECKQTLLKARHVAPSD. The disordered stretch occupies residues 892–1173; the sequence is TGETEATKEK…GSEHGSDDSD (282 aa). Residues 900 to 912 show a composition bias toward basic residues; the sequence is EKKRGGGGGRRSK. Over residues 917–929 the composition is skewed to acidic residues; the sequence is FDEFVNDDTDDDL. A Phosphothreonine modification is found at Thr-925. Residues Ser-932, Ser-941, Ser-943, and Ser-970 each carry the phosphoserine modification. The segment covering 980-994 has biased composition (basic residues); sequence KPKKRRPPRAEKKKA. A phosphoserine mark is found at Ser-1020 and Ser-1021. Positions 1023 to 1034 are enriched in basic and acidic residues; the sequence is EDKLKIADEGHP. 8 positions are modified to phosphoserine: Ser-1037, Ser-1039, Ser-1041, Ser-1079, Ser-1083, Ser-1085, Ser-1095, and Ser-1100. The segment covering 1097 to 1128 has biased composition (polar residues); sequence SEQSDNESVQSGRSPSGASENENDSRPASPSA. Residues 1137-1159 show a composition bias toward low complexity; it reads GSDNEGSGQGSGNESEPEGSNNE. The span at 1160 to 1173 shows a compositional bias: basic and acidic residues; sequence ASDRGSEHGSDDSD.

As to quaternary structure, component of the PAF1 complex, which consists of CDC73, PAF1, LEO1, CTR9, RTF1 and SKIC8. The PAF1 complex interacts with PHF5A. Interacts with KMT2A/MLL1. Interacts with STAT3. Interacts with SETD5. Interacts with ERCC6. In terms of tissue distribution, widely expressed.

The protein localises to the nucleus speckle. In terms of biological role, component of the PAF1 complex (PAF1C) which has multiple functions during transcription by RNA polymerase II and is implicated in regulation of development and maintenance of embryonic stem cell pluripotency. PAF1C associates with RNA polymerase II through interaction with POLR2A CTD non-phosphorylated and 'Ser-2'- and 'Ser-5'-phosphorylated forms and is involved in transcriptional elongation, acting both independently and synergistically with TCEA1 and in cooperation with the DSIF complex and HTATSF1. PAF1C is required for transcription of Hox and Wnt target genes. PAF1C is involved in hematopoiesis and stimulates transcriptional activity of KMT2A/MLL1. PAF1C is involved in histone modifications such as ubiquitination of histone H2B and methylation on histone H3 'Lys-4' (H3K4me3). PAF1C recruits the RNF20/40 E3 ubiquitin-protein ligase complex and the E2 enzyme UBE2A or UBE2B to chromatin which mediate monoubiquitination of 'Lys-120' of histone H2B (H2BK120ub1); UB2A/B-mediated H2B ubiquitination is proposed to be coupled to transcription. PAF1C is involved in mRNA 3' end formation probably through association with cleavage and poly(A) factors. Required for mono- and trimethylation on histone H3 'Lys-4' (H3K4me3) and dimethylation on histone H3 'Lys-79' (H3K4me3). Required for Hox gene transcription. Required for the trimethylation of histone H3 'Lys-4' (H3K4me3) on genes involved in stem cell pluripotency; this function is synergistic with CXXC1 indicative for an involvement of the SET1 complex. Involved in transcriptional regulation of IL6-responsive genes and in JAK-STAT pathway; may regulate DNA-association of STAT3. The chain is RNA polymerase-associated protein CTR9 homolog (Ctr9) from Mus musculus (Mouse).